Here is a 342-residue protein sequence, read N- to C-terminus: Phospho-N-acetylmuramoyl-pentapeptide-transferase (342 aa).

10 helical membrane-spanning segments follow: residues 8–28, 58–78, 86–106, 116–136, 152–172, 184–204, 213–233, 242–262, 267–287, and 318–338; these read VAQPYFCSFLLSTILGFVIAP, GIPSMGGVIILLPCILSTAIF, IWVILTTMVAFAILGGVDDYL, ISLEAKLFAQLLIASAALIFL, GLIDLGWAYMPFAYIVVVGSS, LATLPIITSTAILGIIGHLSL, VVGANIPIFCSALVGSALSFL, VFMGDLGSLSLGASLGLMSVM, FIYAISGCIFVAEAISSMAQV, and IVTRAWVIAMVSFVVSLAAII.

It belongs to the glycosyltransferase 4 family. MraY subfamily. Mg(2+) is required as a cofactor.

Its subcellular location is the cell inner membrane. It carries out the reaction UDP-N-acetyl-alpha-D-muramoyl-L-alanyl-gamma-D-glutamyl-meso-2,6-diaminopimeloyl-D-alanyl-D-alanine + di-trans,octa-cis-undecaprenyl phosphate = di-trans,octa-cis-undecaprenyl diphospho-N-acetyl-alpha-D-muramoyl-L-alanyl-D-glutamyl-meso-2,6-diaminopimeloyl-D-alanyl-D-alanine + UMP. The protein operates within cell wall biogenesis; peptidoglycan biosynthesis. Its function is as follows. Catalyzes the initial step of the lipid cycle reactions in the biosynthesis of the cell wall peptidoglycan: transfers peptidoglycan precursor phospho-MurNAc-pentapeptide from UDP-MurNAc-pentapeptide onto the lipid carrier undecaprenyl phosphate, yielding undecaprenyl-pyrophosphoryl-MurNAc-pentapeptide, known as lipid I. The protein is Phospho-N-acetylmuramoyl-pentapeptide-transferase of Anaplasma marginale (strain Florida).